Reading from the N-terminus, the 62-residue chain is MKTTVILLLAIAIIFAIMTTLTSAKNEETMEEALKGLNELKERLKKQGIDTAALNLDEKLLT.

An N-terminal signal peptide occupies residues 1 to 24 (MKTTVILLLAIAIIFAIMTTLTSA).

As to expression, expressed by the venom gland.

It is found in the secreted. Functionally, may have antimicrobial properties, like most ant linear peptides. The protein is U-myrmeciitoxin(01)-Mg3a of Myrmecia gulosa (Red bulldog ant).